A 396-amino-acid chain; its full sequence is Elongation factor Tu (396 aa).

Positions 10 to 205 (KTHANIGTIG…AVDDYIPTPE (196 aa)) constitute a tr-type G domain. The tract at residues 19 to 26 (GHVDHGKT) is G1. 19-26 (GHVDHGKT) contributes to the GTP binding site. Thr-26 is a binding site for Mg(2+). Positions 61–65 (GITIS) are G2. Residues 82-85 (DCPG) form a G3 region. Residues 82 to 86 (DCPGH) and 137 to 140 (NKCD) contribute to the GTP site. Positions 137–140 (NKCD) are G4. Positions 175-177 (SAL) are G5.

Belongs to the TRAFAC class translation factor GTPase superfamily. Classic translation factor GTPase family. EF-Tu/EF-1A subfamily. Monomer.

It localises to the cytoplasm. It carries out the reaction GTP + H2O = GDP + phosphate + H(+). GTP hydrolase that promotes the GTP-dependent binding of aminoacyl-tRNA to the A-site of ribosomes during protein biosynthesis. This is Elongation factor Tu from Halalkalibacterium halodurans (strain ATCC BAA-125 / DSM 18197 / FERM 7344 / JCM 9153 / C-125) (Bacillus halodurans).